A 411-amino-acid chain; its full sequence is MTNKTWGGRFKKSLDSSVNQFNASLSFDHVLFDQDINGSQVHVKQLAKQKILTEAECQGIYSALEEIRTEIKQGQYSFNERDEEDIHMFIEQLLIQKIGDLGKKLHTGRSRNDQVALDLRLYTRDKGCLINELLTRLIDCLDDLTSKHQQDLMPGYTHLQQAQPVALGAYFNAYQCMFGRDKSRLDDWFKRMNYSPLGAGALAGSTLPLDREWVAESLGFAGIIPNTLDAVSDRDFVIELCSVAAMIMMHLSRLCEDLILWSTQEFNFVILDDAFATGSSLMPNKKNPDVPELIRGKSGRVYGHLMAILTVMKGLPLAYNKDMQEDKEGLFDTINTIIACLQMITPFLQSLTFNTLLMKTKAQSGYLDATAILESLVMKGMPFRNAHHQVGAWIAEAIEKQCSLNELLKGG.

This sequence belongs to the lyase 1 family. Argininosuccinate lyase subfamily.

The protein resides in the cytoplasm. It carries out the reaction 2-(N(omega)-L-arginino)succinate = fumarate + L-arginine. It functions in the pathway amino-acid biosynthesis; L-arginine biosynthesis; L-arginine from L-ornithine and carbamoyl phosphate: step 3/3. The sequence is that of Argininosuccinate lyase from Legionella pneumophila (strain Paris).